Consider the following 545-residue polypeptide: Glucose-6-phosphate isomerase (545 aa).

The Proton donor role is filled by E351. Active-site residues include H382 and K510.

This sequence belongs to the GPI family.

Its subcellular location is the cytoplasm. It catalyses the reaction alpha-D-glucose 6-phosphate = beta-D-fructose 6-phosphate. The protein operates within carbohydrate biosynthesis; gluconeogenesis. It participates in carbohydrate degradation; glycolysis; D-glyceraldehyde 3-phosphate and glycerone phosphate from D-glucose: step 2/4. Catalyzes the reversible isomerization of glucose-6-phosphate to fructose-6-phosphate. The polypeptide is Glucose-6-phosphate isomerase (Shewanella sp. (strain MR-7)).